The following is a 450-amino-acid chain: Methionine aminopeptidase 2-2 (450 aa).

Composition is skewed to basic and acidic residues over residues M1–P10 and R30–D39. The disordered stretch occupies residues M1–F100. The span at G47–G56 shows a compositional bias: acidic residues. Positions K69–T86 are enriched in basic residues. Position 211 (H211) interacts with substrate. A divalent metal cation is bound by residues D232, D243, and H302. H310 is a substrate binding site. A divalent metal cation-binding residues include E335 and E431.

This sequence belongs to the peptidase M24A family. Methionine aminopeptidase eukaryotic type 2 subfamily. Co(2+) is required as a cofactor. The cofactor is Zn(2+). Requires Mn(2+) as cofactor. It depends on Fe(2+) as a cofactor.

The protein localises to the cytoplasm. The catalysed reaction is Release of N-terminal amino acids, preferentially methionine, from peptides and arylamides.. Its function is as follows. Cotranslationally removes the N-terminal methionine from nascent proteins. The N-terminal methionine is often cleaved when the second residue in the primary sequence is small and uncharged (Met-Ala-, Cys, Gly, Pro, Ser, Thr, or Val). The sequence is that of Methionine aminopeptidase 2-2 from Fusarium vanettenii (strain ATCC MYA-4622 / CBS 123669 / FGSC 9596 / NRRL 45880 / 77-13-4) (Fusarium solani subsp. pisi).